The sequence spans 243 residues: MKKHDNIYAKALNKVDDFKFDESVVDVFPDMIQRSVPGYETIVHTIGELAKSSVTPNSMVYDLGCSLGAASLSVSRAVSANTCEIIGVDASSAMVERCRRVVQTFTLPNPISIEQGLAQDVDINNASMVVMNFTLQFIPPSDREGLLASIYKGLNPGGILVLSEKVKHPTRSGNELLIDLHHQFKRDNGYSELEVSQKRAALEKVMLTDTFNEHETRLKKVGFADVVMWYKCYNFTSMVAIKA.

Residues Y39, 64-66, N132, and R199 each bind S-adenosyl-L-methionine; that span reads GCS.

Belongs to the class I-like SAM-binding methyltransferase superfamily. Cx-SAM synthase family. As to quaternary structure, homodimer.

The catalysed reaction is prephenate + S-adenosyl-L-methionine = carboxy-S-adenosyl-L-methionine + 3-phenylpyruvate + H2O. Functionally, catalyzes the conversion of S-adenosyl-L-methionine (SAM) to carboxy-S-adenosyl-L-methionine (Cx-SAM). The protein is Carboxy-S-adenosyl-L-methionine synthase of Alteromonas mediterranea (strain DSM 17117 / CIP 110805 / LMG 28347 / Deep ecotype).